The sequence spans 257 residues: Small ribosomal subunit protein uS15m (257 aa).

A mitochondrion-targeting transit peptide spans 1 to 57; it reads MLRAAWRALSSVRVQAVTQAPVPALRARSSASLPSARCGLQTPSLLNAARAYAVQKP. The disordered stretch occupies residues 228-257; the sequence is KAAAAAAKKEKRERVPENPSNALPEKTKEN. Residues 234–243 are compositionally biased toward basic and acidic residues; the sequence is AKKEKRERVP.

It belongs to the universal ribosomal protein uS15 family. In terms of assembly, component of the mitochondrial ribosome small subunit (28S) which comprises a 12S rRNA and about 30 distinct proteins. Interacts with METTL17.

The protein localises to the mitochondrion matrix. In Rattus norvegicus (Rat), this protein is Small ribosomal subunit protein uS15m (Mrps15).